The chain runs to 286 residues: ATP synthase gamma chain (286 aa).

The protein belongs to the ATPase gamma chain family. F-type ATPases have 2 components, CF(1) - the catalytic core - and CF(0) - the membrane proton channel. CF(1) has five subunits: alpha(3), beta(3), gamma(1), delta(1), epsilon(1). CF(0) has three main subunits: a, b and c.

It is found in the cell inner membrane. In terms of biological role, produces ATP from ADP in the presence of a proton gradient across the membrane. The gamma chain is believed to be important in regulating ATPase activity and the flow of protons through the CF(0) complex. The chain is ATP synthase gamma chain from Pseudoalteromonas atlantica (strain T6c / ATCC BAA-1087).